The sequence spans 467 residues: Prenyltransferase GME11375 (467 aa).

Glu-93 contacts L-tryptophan. Arg-108, Lys-196, Tyr-198, Lys-266, Tyr-268, and Tyr-436 together coordinate dimethylallyl diphosphate.

It belongs to the tryptophan dimethylallyltransferase family.

It participates in secondary metabolite biosynthesis. In terms of biological role, prenyltransferase; part of the gene cluster that mediates the biosynthesis of dibenzodioxocinones such as pestalotiollide B, a novel class of inhibitors against cholesterol ester transfer protein (CEPT). The biosynthesis initiates from condensation of acetate and malonate units catalyzed by the non-reducing PKS pks8/GME11356. Pks8/GME11356 lacks a thioesterase (TE) domain, which is important to the cyclizing of the third ring of atrochrysone carboxylic acid, and the esterase GME11355 might play the role of TE and catalyzes the cyclization reaction of the C ring. The lactamase-like protein GME11357 (or other beta-lactamases in Pestalotiopsis microspora) probably hydrolyzes the thioester bond between the ACP of pks8/GME11356 and the intermediate to release atrochrysone carboxylic acid, which is spontaneously dehydrates to form endocrocin anthrone. Endocrocin anthrone is further converted to emodin via the endocrocin intermediate. Emodin is then oxidized by several enzymes such as the Baeyer-Villiger oxidase GME11358, the oxidoreductase GME11367, the short chain dehydrogenase/reductase GME11373, as well as by other oxidoreductases from the cluster, to modify the A and C rings and open the B ring, and finally yield monodictyphenone. The prenyltransferase GME11375 may catalyze the addition reaction between the C5 side chains and the carbon bone of dibenzodioxocinones. The remaining biochemical reactions to the final product dibenzodioxocinones should be methylation catalyzed by methyltransferase GME11366 and reduction and lactonization reaction catalyzed by a series of oxidordeuctases. This is Prenyltransferase GME11375 from Pestalotiopsis microspora.